Here is a 265-residue protein sequence, read N- to C-terminus: MAAPEVSSAGPNMLHPNSRTLTLRGKRGHAAEDSSQGAVSDCKKMHSSLNKVTACYRQLVLCVGGTSDCTRLREELEESRKKAFDLSTDLSNTLMVLLMNEGVSQEDRVELERIWVLFLSTLEFFQQDLCKAHHLCQLFPLHGRRKRLVNTGVIGKTSEVAYRARNIKSPSSSRMHENQQRTERPCSPDLAGQIEHMERMLHDMQMKVSIPIWTVEATEEAWAEVASTCDLDECSDNEILAGEDITSRGCCAHGQSLPGPLCMVS.

Residues 1–37 form a disordered region; the sequence is MAAPEVSSAGPNMLHPNSRTLTLRGKRGHAAEDSSQG. Positions 70-92 form a coiled coil; sequence TRLREELEESRKKAFDLSTDLSN. Residues 168–187 form a disordered region; it reads KSPSSSRMHENQQRTERPCS. The segment covering 174-186 has biased composition (basic and acidic residues); that stretch reads RMHENQQRTERPC.

The protein belongs to the RGS7BP/RGS9BP family.

Its function is as follows. Regulator of G protein-coupled receptor (GPCR) signaling. Probably acts by regulating the activity of some 'R7' family protein (RGS6, RGS7, RGS9 and/or RGS11). This chain is Regulator of G-protein signaling 9-binding protein (rgs9bp), found in Xenopus tropicalis (Western clawed frog).